Reading from the N-terminus, the 357-residue chain is Probable leucine aminopeptidase ARB_00576 (357 aa).

An N-terminal signal peptide occupies residues 1 to 15 (MKVLAALALSALAMA). Asn76 carries an N-linked (GlcNAc...) asparagine glycan. Residues His167 and Asp185 each coordinate Zn(2+). The tract at residues 169-188 (DSINGNNPQGEAPGADDNGS) is disordered. N-linked (GlcNAc...) asparagine glycosylation occurs at Asn186. Residues Glu224 and Asp251 each coordinate Zn(2+). Asn269 carries an N-linked (GlcNAc...) asparagine glycan. Cys291 and Cys295 are oxidised to a cystine. Residue His324 coordinates Zn(2+).

This sequence belongs to the peptidase M28 family. M28E subfamily. In terms of assembly, monomer. The cofactor is Zn(2+).

It is found in the secreted. Probable extracellular aminopeptidase which contributes to pathogenicity. The sequence is that of Probable leucine aminopeptidase ARB_00576 from Arthroderma benhamiae (strain ATCC MYA-4681 / CBS 112371) (Trichophyton mentagrophytes).